Reading from the N-terminus, the 89-residue chain is Small ribosomal subunit protein uS15 (89 aa).

This sequence belongs to the universal ribosomal protein uS15 family. In terms of assembly, part of the 30S ribosomal subunit. Forms a bridge to the 50S subunit in the 70S ribosome, contacting the 23S rRNA.

Functionally, one of the primary rRNA binding proteins, it binds directly to 16S rRNA where it helps nucleate assembly of the platform of the 30S subunit by binding and bridging several RNA helices of the 16S rRNA. Forms an intersubunit bridge (bridge B4) with the 23S rRNA of the 50S subunit in the ribosome. This Chlamydia muridarum (strain MoPn / Nigg) protein is Small ribosomal subunit protein uS15.